The primary structure comprises 171 residues: Shikimate kinase (171 aa).

ATP is bound at residue 13–18 (GVGKST). Ser17 contributes to the Mg(2+) binding site. 3 residues coordinate substrate: Asp35, Arg59, and Gly81. Arg118 contributes to the ATP binding site. Residue Arg136 coordinates substrate. Arg153 contacts ATP.

This sequence belongs to the shikimate kinase family. Monomer. Mg(2+) serves as cofactor.

It localises to the cytoplasm. The catalysed reaction is shikimate + ATP = 3-phosphoshikimate + ADP + H(+). It functions in the pathway metabolic intermediate biosynthesis; chorismate biosynthesis; chorismate from D-erythrose 4-phosphate and phosphoenolpyruvate: step 5/7. Catalyzes the specific phosphorylation of the 3-hydroxyl group of shikimic acid using ATP as a cosubstrate. The protein is Shikimate kinase of Streptomyces coelicolor (strain ATCC BAA-471 / A3(2) / M145).